Here is a 206-residue protein sequence, read N- to C-terminus: MAANKPKGQNSLALHKVIMVGSGGVGKSALTLQFMYDEFVEDYEPTKADSYRKKVVLDGEEVQIDILDTAGQEDYAAIRDNYFRSGEGFLCVFSITEMESFAATADFREQILRVKEDENVPFLLVGNKSDLEDKRQVSVEEAKNRAEQWNVNYVETSAKTRANVDKVFFDLMREIRARKMEDSKEKNGKKKRKSLAKRIRERCCIL.

Residues 24 to 29 (GVGKSA), 40 to 46 (VEDYEPT), and 127 to 130 (NKSD) contribute to the GTP site. Residues 43 to 51 (YEPTKADSY) carry the Effector region motif. T46 is a glycosylation site ((Microbial infection) O-linked (Glc) threonine; by P.sordellii toxin TcsL). Phosphoserine; by AURKA is present on S194. At C203 the chain carries Cysteine methyl ester. C203 is lipidated: S-geranylgeranyl cysteine. Residues 204 to 206 (CIL) constitute a propeptide, removed in mature form.

It belongs to the small GTPase superfamily. Ras family. In terms of assembly, interacts (via effector domain) with RALBP1; during mitosis, recruits RALBP1 to the mitochondrion where it promotes DNM1L phosphorylation and mitochondrial fission. Interacts with EXOC2/Sec5 and EXOC8/Exo84; binding to EXOC2 and EXOC8 is mutually exclusive. Interacts with Clostridium exoenzyme C3. Interacts with RALGPS1. Interacts with LPAR1 and LPAR2. Interacts with GRK2 in response to LPAR1 activation. RALA and GRK2 binding to LPAR1 is mutually exclusive. Interacts with CDC42. In terms of processing, phosphorylated. Phosphorylation at Ser-194 by AURKA/Aurora kinase A, during mitosis, induces RALA localization to the mitochondrion where it regulates mitochondrial fission. Prenylation is essential for membrane localization. The geranylgeranylated form and the farnesylated mutant do not undergo alternative prenylation in response to geranylgeranyltransferase I inhibitors (GGTIs) and farnesyltransferase I inhibitors (FTIs). Post-translationally, (Microbial infection) Glucosylated at Thr-46 by P.sordellii toxin TcsL from strain 6018. Monoglucosylation completely prevents the recognition of the downstream effector, blocking the GTPases in their inactive form. Not glucosylated by TcsL from strain VPI 9048.

Its subcellular location is the cell membrane. It localises to the cleavage furrow. It is found in the midbody. The protein resides in the midbody ring. The protein localises to the mitochondrion. The enzyme catalyses GTP + H2O = GDP + phosphate + H(+). With respect to regulation, alternates between an inactive form bound to GDP and an active form bound to GTP. Activated by a guanine nucleotide-exchange factor (GEF) and inactivated by a GTPase-activating protein (GAP). Multifunctional GTPase involved in a variety of cellular processes including gene expression, cell migration, cell proliferation, oncogenic transformation and membrane trafficking. Accomplishes its multiple functions by interacting with distinct downstream effectors. Acts as a GTP sensor for GTP-dependent exocytosis of dense core vesicles. The RALA-exocyst complex regulates integrin-dependent membrane raft exocytosis and growth signaling. Key regulator of LPAR1 signaling and competes with GRK2 for binding to LPAR1 thus affecting the signaling properties of the receptor. Required for anchorage-independent proliferation of transformed cells. During mitosis, supports the stabilization and elongation of the intracellular bridge between dividing cells. Cooperates with EXOC2 to recruit other components of the exocyst to the early midbody. During mitosis, also controls mitochondrial fission by recruiting to the mitochondrion RALBP1, which mediates the phosphorylation and activation of DNM1L by the mitotic kinase cyclin B-CDK1. This is Ras-related protein Ral-A (RALA) from Homo sapiens (Human).